A 360-amino-acid chain; its full sequence is DNA replication and repair protein RecF (360 aa).

An ATP-binding site is contributed by 30 to 37 (GHNGSGKT).

This sequence belongs to the RecF family.

The protein localises to the cytoplasm. Its function is as follows. The RecF protein is involved in DNA metabolism; it is required for DNA replication and normal SOS inducibility. RecF binds preferentially to single-stranded, linear DNA. It also seems to bind ATP. This is DNA replication and repair protein RecF from Haemophilus ducreyi (strain 35000HP / ATCC 700724).